Reading from the N-terminus, the 361-residue chain is Phosphoserine aminotransferase (361 aa).

Residue Arg43 participates in L-glutamate binding. Pyridoxal 5'-phosphate contacts are provided by residues 77-78 (AS), Trp103, Thr153, Asp173, and Gln196. Lys197 is modified (N6-(pyridoxal phosphate)lysine). 238–239 (NT) is a pyridoxal 5'-phosphate binding site.

It belongs to the class-V pyridoxal-phosphate-dependent aminotransferase family. SerC subfamily. As to quaternary structure, homodimer. It depends on pyridoxal 5'-phosphate as a cofactor.

It is found in the cytoplasm. It carries out the reaction O-phospho-L-serine + 2-oxoglutarate = 3-phosphooxypyruvate + L-glutamate. The enzyme catalyses 4-(phosphooxy)-L-threonine + 2-oxoglutarate = (R)-3-hydroxy-2-oxo-4-phosphooxybutanoate + L-glutamate. It functions in the pathway amino-acid biosynthesis; L-serine biosynthesis; L-serine from 3-phospho-D-glycerate: step 2/3. Its pathway is cofactor biosynthesis; pyridoxine 5'-phosphate biosynthesis; pyridoxine 5'-phosphate from D-erythrose 4-phosphate: step 3/5. Its function is as follows. Catalyzes the reversible conversion of 3-phosphohydroxypyruvate to phosphoserine and of 3-hydroxy-2-oxo-4-phosphonooxybutanoate to phosphohydroxythreonine. This chain is Phosphoserine aminotransferase, found in Pseudomonas entomophila (strain L48).